The sequence spans 396 residues: LIM/homeobox protein Lhx9 (396 aa).

LIM zinc-binding domains follow at residues A69–V130 and Q131–G193. Disordered stretches follow at residues E248 to T272, R328 to T365, and S377 to F396. The segment at residues T267–V326 is a DNA-binding region (homeobox). Residues L352–T365 show a composition bias toward low complexity. Residues S384–F396 show a composition bias toward polar residues.

It is found in the nucleus. Its function is as follows. May be involved in gonadal development. This is LIM/homeobox protein Lhx9 (lhx9) from Danio rerio (Zebrafish).